The following is a 197-amino-acid chain: ATP-dependent Clp protease proteolytic subunit (197 aa).

Serine 97 acts as the Nucleophile in catalysis. Residue histidine 122 is part of the active site.

Belongs to the peptidase S14 family. As to quaternary structure, fourteen ClpP subunits assemble into 2 heptameric rings which stack back to back to give a disk-like structure with a central cavity, resembling the structure of eukaryotic proteasomes.

The protein localises to the cytoplasm. It carries out the reaction Hydrolysis of proteins to small peptides in the presence of ATP and magnesium. alpha-casein is the usual test substrate. In the absence of ATP, only oligopeptides shorter than five residues are hydrolyzed (such as succinyl-Leu-Tyr-|-NHMec, and Leu-Tyr-Leu-|-Tyr-Trp, in which cleavage of the -Tyr-|-Leu- and -Tyr-|-Trp bonds also occurs).. Cleaves peptides in various proteins in a process that requires ATP hydrolysis. Has a chymotrypsin-like activity. Plays a major role in the degradation of misfolded proteins. The polypeptide is ATP-dependent Clp protease proteolytic subunit (Trichlorobacter lovleyi (strain ATCC BAA-1151 / DSM 17278 / SZ) (Geobacter lovleyi)).